The sequence spans 571 residues: Proline--tRNA ligase (571 aa).

This sequence belongs to the class-II aminoacyl-tRNA synthetase family. ProS type 1 subfamily. Homodimer.

It is found in the cytoplasm. It carries out the reaction tRNA(Pro) + L-proline + ATP = L-prolyl-tRNA(Pro) + AMP + diphosphate. In terms of biological role, catalyzes the attachment of proline to tRNA(Pro) in a two-step reaction: proline is first activated by ATP to form Pro-AMP and then transferred to the acceptor end of tRNA(Pro). As ProRS can inadvertently accommodate and process non-cognate amino acids such as alanine and cysteine, to avoid such errors it has two additional distinct editing activities against alanine. One activity is designated as 'pretransfer' editing and involves the tRNA(Pro)-independent hydrolysis of activated Ala-AMP. The other activity is designated 'posttransfer' editing and involves deacylation of mischarged Ala-tRNA(Pro). The misacylated Cys-tRNA(Pro) is not edited by ProRS. This Shewanella putrefaciens (strain CN-32 / ATCC BAA-453) protein is Proline--tRNA ligase.